A 151-amino-acid polypeptide reads, in one-letter code: Small ribosomal subunit protein uS15 (151 aa).

Basic residues predominate over residues 1–16; that stretch reads MPHRSRHKKGRSRSVR. The interval 1–21 is disordered; sequence MPHRSRHKKGRSRSVRPAHPT.

Belongs to the universal ribosomal protein uS15 family. Part of the 30S ribosomal subunit.

The sequence is that of Small ribosomal subunit protein uS15 from Pyrobaculum islandicum (strain DSM 4184 / JCM 9189 / GEO3).